The primary structure comprises 119 residues: U9-hexatoxin-Hi1 (119 aa).

The N-terminal stretch at 1–17 (MKLYLVILVTSVALAAA) is a signal peptide. Positions 18–53 (SPTRTKEEPIEDELLEALLSVEKSLFNEETTVMEKR) are excised as a propeptide. 4 cysteine pairs are disulfide-bonded: Cys-55–Cys-73, Cys-66–Cys-79, Cys-70–Cys-117, and Cys-72–Cys-88.

Belongs to the neurotoxin 03 (Tx2) family. 03 subfamily. In terms of tissue distribution, expressed by the venom gland.

The protein localises to the secreted. Its function is as follows. Probable ion channel inhibitor. This is U9-hexatoxin-Hi1 from Hadronyche infensa (Fraser island funnel-web spider).